The following is a 410-amino-acid chain: Trans-splicing factor Raa2, chloroplastic (410 aa).

2 disordered regions span residues 1-40 (MRTR…QRPA) and 56-106 (AADH…QQQV). The transit peptide at 1–46 (MRTRAGAFFGKQRSTSPSGSSTSASRQWLRSSPGRTQRPAAHRVLA) directs the protein to the chloroplast. Residues 14-25 (STSPSGSSTSAS) show a composition bias toward low complexity. Over residues 26-35 (RQWLRSSPGR) the composition is skewed to polar residues. Positions 96–106 (RQAQRRQQQQV) are enriched in low complexity.

This sequence belongs to the pseudouridine synthase TruB family. Possibly associated with other factors required for trans-splicing.

The protein resides in the plastid. The protein localises to the chloroplast. Functionally, required for trans-splicing of exons 2 and 3 of the chloroplast encoded psaA mRNA (a group II intron). It is not known if this protein has pseudouridine activity; mutation of the potential active site residue does not cause loss of trans-splicing. In Chlamydomonas reinhardtii (Chlamydomonas smithii), this protein is Trans-splicing factor Raa2, chloroplastic (RAA2).